A 110-amino-acid chain; its full sequence is uncharacterized protein (110 aa).

Residues 1–26 form the signal peptide; it reads MIRNVLLAFMICSGMTLLGGCSSVMS. Residues 87 to 110 are disordered; that stretch reads RVEKSEANAQATNAVIPPARMPDN.

This sequence to E.coli YceK.

This is an uncharacterized protein from Escherichia coli (strain K12).